We begin with the raw amino-acid sequence, 557 residues long: Urocanate hydratase (557 aa).

Positions methionine 1–asparagine 20 are disordered. NAD(+)-binding positions include glycine 52–glycine 53, glutamine 130, glycine 176–glycine 178, glutamate 196, arginine 201, asparagine 242–alanine 243, glutamine 263–histidine 267, tyrosine 273–leucine 274, and tyrosine 322. Residue cysteine 410 is part of the active site. Position 492 (glycine 492) interacts with NAD(+).

Belongs to the urocanase family. Requires NAD(+) as cofactor.

The protein resides in the cytoplasm. The enzyme catalyses 4-imidazolone-5-propanoate = trans-urocanate + H2O. The protein operates within amino-acid degradation; L-histidine degradation into L-glutamate; N-formimidoyl-L-glutamate from L-histidine: step 2/3. Functionally, catalyzes the conversion of urocanate to 4-imidazolone-5-propionate. This Brucella canis (strain ATCC 23365 / NCTC 10854 / RM-666) protein is Urocanate hydratase.